The following is a 105-amino-acid chain: Class I hydrophobin 1 (105 aa).

A signal peptide spans 1-18 (MAFIKSLLIASVAAVAFA). 4 cysteine pairs are disulfide-bonded: C42-C83, C50-C76, C51-C62, and C84-C100.

This sequence belongs to the fungal hydrophobin family. Self-assembles to form functional amyloid fibrils called rodlets. Self-assembly into fibrillar rodlets occurs spontaneously at hydrophobic:hydrophilic interfaces and the rodlets further associate laterally to form amphipathic monolayers.

Its subcellular location is the secreted. It is found in the cell wall. Functionally, aerial growth, conidiation, and dispersal of filamentous fungi in the environment rely upon a capability of their secreting small amphipathic proteins called hydrophobins (HPBs) with low sequence identity. Class I can self-assemble into an outermost layer of rodlet bundles on aerial cell surfaces, conferring cellular hydrophobicity that supports fungal growth, development and dispersal; whereas Class II form highly ordered films at water-air interfaces through intermolecular interactions but contribute nothing to the rodlet structure. This chain is Class I hydrophobin 1, found in Davidiella tassiana (Mycosphaerella tassiana).